The sequence spans 295 residues: 3-hydroxy-5-phosphonooxypentane-2,4-dione thiolase (295 aa).

The Schiff-base intermediate with substrate role is filled by Lys-203.

The protein belongs to the DeoC/FbaB aldolase family. As to quaternary structure, homodecamer.

The protein resides in the cytoplasm. The catalysed reaction is dihydroxyacetone phosphate + acetyl-CoA = 3-hydroxy-2,4-dioxopentyl phosphate + CoA. Functionally, involved in the degradation of phospho-AI-2, thereby terminating induction of the lsr operon and closing the AI-2 signaling cycle. Catalyzes the transfer of an acetyl moiety from 3-hydroxy-5-phosphonooxypentane-2,4-dione to CoA to form glycerone phosphate and acetyl-CoA. The sequence is that of 3-hydroxy-5-phosphonooxypentane-2,4-dione thiolase from Klebsiella pneumoniae subsp. pneumoniae (strain ATCC 700721 / MGH 78578).